The primary structure comprises 205 residues: MEVSIINVNSDKIGTIDLNPLIFSVDYRPDILKMVVNWQLSKRRAGTHKAKTIGDISGTTAKPYRQKHTGRARQGSLRSPQFRGGAVIFGPVVRNHAYSLNKKVRKLGLKVALSLKNSCNKLLILDSIDVNFVKTTQVLQFIRNFEHKSFLIIDKDYNKNVVCSCRNLHNVTLLKQIGTNVLDILRHDCIILTVGAVKYLEERLL.

The tract at residues 56–78 (ISGTTAKPYRQKHTGRARQGSLR) is disordered.

Belongs to the universal ribosomal protein uL4 family. In terms of assembly, part of the 50S ribosomal subunit.

Functionally, one of the primary rRNA binding proteins, this protein initially binds near the 5'-end of the 23S rRNA. It is important during the early stages of 50S assembly. It makes multiple contacts with different domains of the 23S rRNA in the assembled 50S subunit and ribosome. Forms part of the polypeptide exit tunnel. This is Large ribosomal subunit protein uL4 from Ehrlichia canis (strain Jake).